The following is a 42-amino-acid chain: Fungal defensin eurocin (42 aa).

Residues Phe2, Gly3, Cys4, and His14 each coordinate beta-D-GlcNAc-(1-&gt;4)-Mur2Ac(oyl-L-Ala-gamma-D-Glu-L-Lys-D-Ala-D-Ala)-di-trans,octa-cis-undecaprenyl diphosphate. Intrachain disulfides connect Cys4–Cys27, Cys11–Cys38, and Cys15–Cys40. Residues 31–35 (WYLGH) are interaction site with membranes lipids. Cys38 contacts beta-D-GlcNAc-(1-&gt;4)-Mur2Ac(oyl-L-Ala-gamma-D-Glu-L-Lys-D-Ala-D-Ala)-di-trans,octa-cis-undecaprenyl diphosphate.

Belongs to the invertebrate defensin family.

The protein resides in the secreted. Its subcellular location is the target cell membrane. Functionally, antimicrobial peptide that acts against Gram-positive bacteria but not against Gram-negative bacteria. It selectively inhibits peptidoglycan biosynthesis through complex formation with the cell wall precursor lipid II (1:1 molar ratio) thus inhibiting cell wall synthesis. It does not disrupt cell membranes. In vivo, is effective against an intraperitoneal infection with S.pneumoniae. In vitro, it shows very low hemolytic and cytolytic activities. This Aspergillus amstelodami protein is Fungal defensin eurocin.